The sequence spans 136 residues: Large-conductance mechanosensitive channel (136 aa).

2 consecutive transmembrane segments (helical) span residues 9 to 29 (AFAS…GAAF) and 79 to 99 (IQTV…LKAI).

This sequence belongs to the MscL family. Homopentamer.

The protein resides in the cell inner membrane. In terms of biological role, channel that opens in response to stretch forces in the membrane lipid bilayer. May participate in the regulation of osmotic pressure changes within the cell. The polypeptide is Large-conductance mechanosensitive channel (Shewanella sp. (strain MR-4)).